Here is a 514-residue protein sequence, read N- to C-terminus: Na(+)/H(+) antiporter NhaB (514 aa).

The next 11 membrane-spanning stretches (helical) occupy residues 21-41 (LAIV…SPFI), 43-63 (GWLL…CYPL), 88-108 (IMAN…IFFM), 143-163 (FLDA…FYGV), 203-223 (LMMH…VGEP), 239-259 (FFLR…LTCF), 304-324 (ALIA…VGLI), 349-369 (QESL…AVII), 390-410 (LALF…VFVA), 448-468 (ATPN…SPLI), and 484-504 (IVLS…ATIW).

It belongs to the NhaB Na(+)/H(+) (TC 2.A.34) antiporter family.

The protein localises to the cell inner membrane. It carries out the reaction 2 Na(+)(in) + 3 H(+)(out) = 2 Na(+)(out) + 3 H(+)(in). Na(+)/H(+) antiporter that extrudes sodium in exchange for external protons. This is Na(+)/H(+) antiporter NhaB from Haemophilus influenzae (strain 86-028NP).